The sequence spans 147 residues: MPKANIYYFVEDIQFKLPNPKIITDWIHNVIQQENCQLVNLNFIFCSDNFLHKKNLKYLQHDTLTDVITFSYAEDQKNIEGEIYISIERVSDNATTYQIDFWQELYTVMIHGVLHLLGYNDETLLEQEEMRKKESIYMLANRIVNLH.

His111, His115, and Asp121 together coordinate Zn(2+).

It belongs to the endoribonuclease YbeY family. Requires Zn(2+) as cofactor.

Its subcellular location is the cytoplasm. Its function is as follows. Single strand-specific metallo-endoribonuclease involved in late-stage 70S ribosome quality control and in maturation of the 3' terminus of the 16S rRNA. In Amoebophilus asiaticus (strain 5a2), this protein is Endoribonuclease YbeY.